A 316-amino-acid chain; its full sequence is Cation efflux system protein CzcD (316 aa).

The next 6 membrane-spanning stretches (helical) occupy residues 17-37 (LKIA…GGVM), 47-67 (AAHM…IAIA), 82-102 (FEIL…IYIL), 115-135 (IEST…LISM), 152-172 (YLEV…AIII), and 174-194 (FTGW…WVLP).

It belongs to the cation diffusion facilitator (CDF) transporter (TC 2.A.4) family. SLC30A subfamily.

The protein localises to the cell membrane. Necessary for activation of the czc determinant. This chain is Cation efflux system protein CzcD (czcD), found in Alcaligenes sp. (strain CT14).